We begin with the raw amino-acid sequence, 305 residues long: Homoserine O-acetyltransferase (305 aa).

Residue C142 is the Acyl-thioester intermediate of the active site. Positions 163 and 192 each coordinate substrate. The Proton acceptor role is filled by H235. E237 is an active-site residue. R249 serves as a coordination point for substrate.

It belongs to the MetA family.

It is found in the cytoplasm. The enzyme catalyses L-homoserine + acetyl-CoA = O-acetyl-L-homoserine + CoA. Its pathway is amino-acid biosynthesis; L-methionine biosynthesis via de novo pathway; O-acetyl-L-homoserine from L-homoserine: step 1/1. Functionally, transfers an acetyl group from acetyl-CoA to L-homoserine, forming acetyl-L-homoserine. The chain is Homoserine O-acetyltransferase from Acetivibrio thermocellus (strain ATCC 27405 / DSM 1237 / JCM 9322 / NBRC 103400 / NCIMB 10682 / NRRL B-4536 / VPI 7372) (Clostridium thermocellum).